The following is a 217-amino-acid chain: Adapter protein MecA (217 aa).

It belongs to the MecA family. Homodimer.

Its function is as follows. Enables the recognition and targeting of unfolded and aggregated proteins to the ClpC protease or to other proteins involved in proteolysis. Acts negatively in the development of competence by binding ComK and recruiting it to the ClpCP protease. When overexpressed, inhibits sporulation. Also involved in Spx degradation by ClpC. The protein is Adapter protein MecA of Alkalihalophilus pseudofirmus (strain ATCC BAA-2126 / JCM 17055 / OF4) (Bacillus pseudofirmus).